Here is a 562-residue protein sequence, read N- to C-terminus: Dihydroxy-acid dehydratase (562 aa).

Asp80 provides a ligand contact to Mg(2+). Residue Cys121 participates in [2Fe-2S] cluster binding. Positions 122 and 123 each coordinate Mg(2+). Residue Lys123 is modified to N6-carboxylysine. Cys194 serves as a coordination point for [2Fe-2S] cluster. Glu446 is a Mg(2+) binding site. Ser472 functions as the Proton acceptor in the catalytic mechanism.

This sequence belongs to the IlvD/Edd family. In terms of assembly, homodimer. It depends on [2Fe-2S] cluster as a cofactor. Mg(2+) serves as cofactor.

The catalysed reaction is (2R)-2,3-dihydroxy-3-methylbutanoate = 3-methyl-2-oxobutanoate + H2O. The enzyme catalyses (2R,3R)-2,3-dihydroxy-3-methylpentanoate = (S)-3-methyl-2-oxopentanoate + H2O. It participates in amino-acid biosynthesis; L-isoleucine biosynthesis; L-isoleucine from 2-oxobutanoate: step 3/4. The protein operates within amino-acid biosynthesis; L-valine biosynthesis; L-valine from pyruvate: step 3/4. Its function is as follows. Functions in the biosynthesis of branched-chain amino acids. Catalyzes the dehydration of (2R,3R)-2,3-dihydroxy-3-methylpentanoate (2,3-dihydroxy-3-methylvalerate) into 2-oxo-3-methylpentanoate (2-oxo-3-methylvalerate) and of (2R)-2,3-dihydroxy-3-methylbutanoate (2,3-dihydroxyisovalerate) into 2-oxo-3-methylbutanoate (2-oxoisovalerate), the penultimate precursor to L-isoleucine and L-valine, respectively. The polypeptide is Dihydroxy-acid dehydratase (Staphylococcus aureus (strain bovine RF122 / ET3-1)).